The primary structure comprises 360 residues: UDP-N-acetylglucosamine--N-acetylmuramyl-(pentapeptide) pyrophosphoryl-undecaprenol N-acetylglucosamine transferase (360 aa).

Residues 17 to 19, N130, R166, S200, I247, and Q291 each bind UDP-N-acetyl-alpha-D-glucosamine; that span reads TAG.

The protein belongs to the glycosyltransferase 28 family. MurG subfamily.

It is found in the cell membrane. The enzyme catalyses di-trans,octa-cis-undecaprenyl diphospho-N-acetyl-alpha-D-muramoyl-L-alanyl-D-glutamyl-meso-2,6-diaminopimeloyl-D-alanyl-D-alanine + UDP-N-acetyl-alpha-D-glucosamine = di-trans,octa-cis-undecaprenyl diphospho-[N-acetyl-alpha-D-glucosaminyl-(1-&gt;4)]-N-acetyl-alpha-D-muramoyl-L-alanyl-D-glutamyl-meso-2,6-diaminopimeloyl-D-alanyl-D-alanine + UDP + H(+). It participates in cell wall biogenesis; peptidoglycan biosynthesis. Cell wall formation. Catalyzes the transfer of a GlcNAc subunit on undecaprenyl-pyrophosphoryl-MurNAc-pentapeptide (lipid intermediate I) to form undecaprenyl-pyrophosphoryl-MurNAc-(pentapeptide)GlcNAc (lipid intermediate II). The protein is UDP-N-acetylglucosamine--N-acetylmuramyl-(pentapeptide) pyrophosphoryl-undecaprenol N-acetylglucosamine transferase of Corynebacterium efficiens (strain DSM 44549 / YS-314 / AJ 12310 / JCM 11189 / NBRC 100395).